A 149-amino-acid polypeptide reads, in one-letter code: MKVIAILTLLLFCSPTHSSFWQFQRRVKHITGRSAFFSYYGYGCYCGLGDKGIPVDDTDRHSPSSPSPYEKLKEFSCQPVLNSYQFHIVNGAVVCGCTLGPGASCHCRLKACECDKQSVHCFKESLPTYEKNFKQFSSQPRCGRHKPWC.

Residues 1–18 (MKVIAILTLLLFCSPTHS) form the signal peptide. 4 disulfide bridges follow: Cys-44-Cys-142, Cys-77-Cys-107, Cys-95-Cys-112, and Cys-97-Cys-105. Positions 45, 47, and 49 each coordinate Ca(2+).

It belongs to the phospholipase A2 family. Ca(2+) serves as cofactor.

It localises to the secreted. In terms of biological role, inactive phospholipase. This is Putative inactive group IIC secretory phospholipase A2 (PLA2G2C) from Homo sapiens (Human).